The following is a 360-amino-acid chain: Chorismate synthase (360 aa).

Arginine 46 contacts NADP(+). FMN-binding positions include 122 to 124 (RAS), glycine 282, 297 to 301 (KPTPS), and arginine 324.

It belongs to the chorismate synthase family. FMNH2 is required as a cofactor.

The catalysed reaction is 5-O-(1-carboxyvinyl)-3-phosphoshikimate = chorismate + phosphate. The protein operates within metabolic intermediate biosynthesis; chorismate biosynthesis; chorismate from D-erythrose 4-phosphate and phosphoenolpyruvate: step 7/7. Functionally, catalyzes the anti-1,4-elimination of the C-3 phosphate and the C-6 proR hydrogen from 5-enolpyruvylshikimate-3-phosphate (EPSP) to yield chorismate, which is the branch point compound that serves as the starting substrate for the three terminal pathways of aromatic amino acid biosynthesis. This reaction introduces a second double bond into the aromatic ring system. This chain is Chorismate synthase, found in Archaeoglobus fulgidus (strain ATCC 49558 / DSM 4304 / JCM 9628 / NBRC 100126 / VC-16).